A 90-amino-acid chain; its full sequence is Small ribosomal subunit protein bS16 (90 aa).

Belongs to the bacterial ribosomal protein bS16 family.

In Oceanobacillus iheyensis (strain DSM 14371 / CIP 107618 / JCM 11309 / KCTC 3954 / HTE831), this protein is Small ribosomal subunit protein bS16.